A 265-amino-acid polypeptide reads, in one-letter code: Neutrophil elastase (265 aa).

Positions 1 to 26 are cleaved as a signal peptide; sequence MALGRLSSRTLAAMLLALFLGGPALA. Residues 29 to 247 form the Peptidase S1 domain; the sequence is IVGGRPARPH…FADWINSIIR (219 aa). C54 and C70 are joined by a disulfide. Residues H69 and D116 each act as charge relay system in the active site. 2 N-linked (GlcNAc...) asparagine glycosylation sites follow: N123 and N172. Cystine bridges form between C150-C208, C180-C187, and C198-C223. S202 acts as the Charge relay system in catalysis.

It belongs to the peptidase S1 family. Elastase subfamily. As to quaternary structure, interacts with NOTCH2NL.

It carries out the reaction Hydrolysis of proteins, including elastin. Preferential cleavage: Val-|-Xaa &gt; Ala-|-Xaa.. Its function is as follows. Serine protease that modifies the functions of natural killer cells, monocytes and granulocytes. Inhibits C5a-dependent neutrophil enzyme release and chemotaxis. Promotes blood coagulation. Through the activation of the platelet fibrinogen receptor integrin alpha-IIb/beta-3, potentiates platelet aggregation induced by a threshold concentration of cathepsin G (CTSG). Cleaves and thus inactivates tissue factor pathway inhibitor (TFPI). Capable of killing E.coli; probably digests outer membrane protein A (ompA) in E.coli. This chain is Neutrophil elastase (Elane), found in Mus musculus (Mouse).